A 362-amino-acid polypeptide reads, in one-letter code: Phosphoserine aminotransferase (362 aa).

Position 43 (arginine 43) interacts with L-glutamate. Residues 77-78, tryptophan 103, threonine 153, aspartate 173, and glutamine 196 contribute to the pyridoxal 5'-phosphate site; that span reads AR. Lysine 197 is subject to N6-(pyridoxal phosphate)lysine.

The protein belongs to the class-V pyridoxal-phosphate-dependent aminotransferase family. SerC subfamily. As to quaternary structure, homodimer. Pyridoxal 5'-phosphate is required as a cofactor.

The protein resides in the cytoplasm. The enzyme catalyses O-phospho-L-serine + 2-oxoglutarate = 3-phosphooxypyruvate + L-glutamate. It carries out the reaction 4-(phosphooxy)-L-threonine + 2-oxoglutarate = (R)-3-hydroxy-2-oxo-4-phosphooxybutanoate + L-glutamate. It participates in amino-acid biosynthesis; L-serine biosynthesis; L-serine from 3-phospho-D-glycerate: step 2/3. It functions in the pathway cofactor biosynthesis; pyridoxine 5'-phosphate biosynthesis; pyridoxine 5'-phosphate from D-erythrose 4-phosphate: step 3/5. Functionally, catalyzes the reversible conversion of 3-phosphohydroxypyruvate to phosphoserine and of 3-hydroxy-2-oxo-4-phosphonooxybutanoate to phosphohydroxythreonine. The polypeptide is Phosphoserine aminotransferase (Legionella pneumophila (strain Lens)).